Consider the following 233-residue polypeptide: Large ribosomal subunit protein uL1 (233 aa).

Belongs to the universal ribosomal protein uL1 family. As to quaternary structure, part of the 50S ribosomal subunit.

Its function is as follows. Binds directly to 23S rRNA. The L1 stalk is quite mobile in the ribosome, and is involved in E site tRNA release. Protein L1 is also a translational repressor protein, it controls the translation of the L11 operon by binding to its mRNA. This chain is Large ribosomal subunit protein uL1, found in Shewanella denitrificans (strain OS217 / ATCC BAA-1090 / DSM 15013).